The following is a 124-amino-acid chain: UPF0212 protein Hlac_0869 (124 aa).

It belongs to the UPF0212 family.

In Halorubrum lacusprofundi (strain ATCC 49239 / DSM 5036 / JCM 8891 / ACAM 34), this protein is UPF0212 protein Hlac_0869.